Consider the following 365-residue polypeptide: MKPLPSTNGKVNGNGKHHDSSLSSTSSTSSSSSSDTQFNISDRYGDFLHRLDTLDTWPKSNEQILLEPYTYLNNIPGKEIRSMMIDAFNHWLQIPRPALEIIKKIVGQLHTASLLMDDVEDDSDLRRGVPVTHKIYGIPQTINTANYVYFLAYQELSKLKPCLSSNASTDLWSLVNDELLQLHRGQGMDLYWRDSLTCPTEEEYLQMVNNKTGGLFRIAIKLMIALSPLTETPDYLPLVNLVGIIFQIRDDLLNLSSVYTKNKGFCEDLTEGKFSFPIVHSIRADSSNHQLMNILRQKPTDIGTKTFAVSYMKDQTKSLQYTREVLTCLEEQAIEEVTRLGGNPALESIFELMHVLPSPPATDQH.

The span at 1-11 (MKPLPSTNGKV) shows a compositional bias: polar residues. The disordered stretch occupies residues 1 to 36 (MKPLPSTNGKVNGNGKHHDSSLSSTSSTSSSSSSDT). Low complexity predominate over residues 21–34 (SLSSTSSTSSSSSS). Residues K78, R81, and H110 each contribute to the isopentenyl diphosphate site. Mg(2+)-binding residues include D117 and D121. A dimethylallyl diphosphate-binding site is contributed by R126. R127 is an isopentenyl diphosphate binding site. Dimethylallyl diphosphate is bound by residues K211, T212, and Q247. Residue D250 coordinates Mg(2+). 3 residues coordinate dimethylallyl diphosphate: N254, K263, and K273.

This sequence belongs to the FPP/GGPP synthase family. The cofactor is Mg(2+).

The enzyme catalyses isopentenyl diphosphate + dimethylallyl diphosphate = (2E)-geranyl diphosphate + diphosphate. It catalyses the reaction isopentenyl diphosphate + (2E)-geranyl diphosphate = (2E,6E)-farnesyl diphosphate + diphosphate. It carries out the reaction isopentenyl diphosphate + (2E,6E)-farnesyl diphosphate = (2E,6E,10E)-geranylgeranyl diphosphate + diphosphate. Geranylgeranyl pyrophosphate synthase that catalyzes the trans-addition of the three molecules of IPP onto DMAPP to form geranylgeranyl pyrophosphate. Does not show any monoterpene nor sesquiterpene synthase activity. This Melampsora lini (Rust fungus) protein is Geranylgeranyl pyrophosphate synthase.